We begin with the raw amino-acid sequence, 172 residues long: Putative phosphoesterase BCAH820_1309 (172 aa).

H34 (proton donor) is an active-site residue. 2 consecutive short sequence motifs (HXTX) follow at residues H34–L37 and H115–I118. The Proton acceptor role is filled by H115.

It belongs to the 2H phosphoesterase superfamily. YjcG family.

This chain is Putative phosphoesterase BCAH820_1309, found in Bacillus cereus (strain AH820).